The chain runs to 327 residues: Ribosomal RNA small subunit methyltransferase H (327 aa).

Residues 36-38 (GGH), Asp61, Phe88, Asp114, and Gln121 each bind S-adenosyl-L-methionine.

It belongs to the methyltransferase superfamily. RsmH family.

It localises to the cytoplasm. It catalyses the reaction cytidine(1402) in 16S rRNA + S-adenosyl-L-methionine = N(4)-methylcytidine(1402) in 16S rRNA + S-adenosyl-L-homocysteine + H(+). In terms of biological role, specifically methylates the N4 position of cytidine in position 1402 (C1402) of 16S rRNA. In Chlorobium phaeovibrioides (strain DSM 265 / 1930) (Prosthecochloris vibrioformis (strain DSM 265)), this protein is Ribosomal RNA small subunit methyltransferase H.